Consider the following 118-residue polypeptide: MATDLMSVVEATQLRDDVPDFDSGDTVNVHLRVVEGEKERIQQFEGVCLSRRGSGPNETITVRKVSEGVGVERIFPVHSPRVAQIDVVRRGAVNRSKLSYLRGLSGKDARIQEQIRGN.

The protein belongs to the bacterial ribosomal protein bL19 family.

In terms of biological role, this protein is located at the 30S-50S ribosomal subunit interface and may play a role in the structure and function of the aminoacyl-tRNA binding site. The polypeptide is Large ribosomal subunit protein bL19 (Salinibacter ruber (strain DSM 13855 / M31)).